A 330-amino-acid polypeptide reads, in one-letter code: Phospholipase C (330 aa).

A signal peptide spans 1 to 34; the sequence is MVKKTKSNSLKKVATLALANLLLVGALTDNSAKA. Cys-155 and Cys-191 are oxidised to a cystine.

This sequence belongs to the neutral sphingomyelinase family. In terms of assembly, monomer.

It localises to the secreted. The catalysed reaction is a 1,2-diacyl-sn-glycero-3-phosphocholine + H2O = phosphocholine + a 1,2-diacyl-sn-glycerol + H(+). Bacterial hemolysins are exotoxins that attack blood cell membranes and cause cell rupture. Beta-hemolysin is a phospholipase C with specific activity toward sphingomyelins. Has a high specificity for sphingomyelin, hydrolyzes lysophosphatidylcholine at a much lower rate, but has no activity towards phosphatidylcholine, phosphatidylethanolamine, or phosphatidylserine. This is Phospholipase C (hlb) from Staphylococcus aureus (strain NCTC 8325 / PS 47).